The sequence spans 139 residues: Transcription initiation factor IIA small chain homolog (139 aa).

The tract at residues 113 to 139 is disordered; the sequence is LSAQGPSKRVNRAHAAAAGDDEDDDSD.

This sequence belongs to the TFIIA subunit 2 family.

Its subcellular location is the nucleus. This is Transcription initiation factor IIA small chain homolog from Caenorhabditis elegans.